The chain runs to 396 residues: L-lactate dehydrogenase (396 aa).

In terms of domain architecture, FMN hydroxy acid dehydrogenase spans 1 to 380 (MIISAASDYR…SGDSLVQELG (380 aa)). A substrate-binding site is contributed by Tyr-24. Residues Ser-106 and Gln-127 each coordinate FMN. Tyr-129 serves as a coordination point for substrate. FMN is bound at residue Thr-155. A substrate-binding site is contributed by Arg-164. Lys-251 is an FMN binding site. The active-site Proton acceptor is the His-275. Arg-278 is a substrate binding site. 306-330 (DSGIRNGLDVVRMIALGADTVLLGR) is an FMN binding site.

It belongs to the FMN-dependent alpha-hydroxy acid dehydrogenase family. It depends on FMN as a cofactor.

Its subcellular location is the cell inner membrane. It catalyses the reaction (S)-lactate + A = pyruvate + AH2. Catalyzes the conversion of L-lactate to pyruvate. Is coupled to the respiratory chain. The chain is L-lactate dehydrogenase from Salmonella paratyphi C (strain RKS4594).